The primary structure comprises 786 residues: DNA repair and recombination protein RAD54-like (786 aa).

A required for chromatin remodeling, strand pairing activities and coupling of ATPase activity region spans residues 2 to 9; that stretch reads RRSLAPSQ. Thr22 carries the phosphothreonine modification. A Helicase ATP-binding domain is found at 165–340; that stretch reads EGKRGNFNGC…FSLVNFVNPE (176 aa). 178-185 contacts ATP; that stretch reads DEMGLGKT. The DEGH box signature appears at 291–294; it reads DEGH. Residues 497 to 654 form the Helicase C-terminal domain; the sequence is LLDFMLAAIR…NNDSAEKHFT (158 aa). Residues 740 to 786 form a disordered region; sequence KQPTCITEDNHSEQPQLNSKRNANSVLENDDDEDFDPNSSDEKFLGF. The span at 752–766 shows a compositional bias: polar residues; that stretch reads EQPQLNSKRNANSVL.

It belongs to the SNF2/RAD54 helicase family. Interacts (via N-terminus) with spn-A/Rad51.

It is found in the nucleus. Functionally, involved in mitotic DNA repair and meiotic recombination. Functions in the recombinational DNA repair pathway. Essential for interhomolog gene conversion (GC), but may have a less important role in intersister GC than spn-A/Rad51. In the presence of DNA, spn-A/Rad51 enhances the ATPase activity of okr/Rad54. The polypeptide is DNA repair and recombination protein RAD54-like (Drosophila virilis (Fruit fly)).